We begin with the raw amino-acid sequence, 445 residues long: V-type proton ATPase subunit H (445 aa).

This sequence belongs to the V-ATPase H subunit family. As to quaternary structure, V-ATPase is a heteromultimeric enzyme composed of a peripheral catalytic V1 complex (components A to H) attached to an integral membrane V0 proton pore complex (components: a, c, c', c'' and d).

Its function is as follows. Subunit of the peripheral V1 complex of vacuolar ATPase. Subunit H activates the ATPase activity of the enzyme and couples ATPase activity to proton flow. Vacuolar ATPase is responsible for acidifying a variety of intracellular compartments in eukaryotic cells, thus providing most of the energy required for transport processes in the vacuolar system. The sequence is that of V-type proton ATPase subunit H (vatH) from Dictyostelium discoideum (Social amoeba).